The sequence spans 278 residues: Mediator of RNA polymerase II transcription subunit 18 (278 aa).

It belongs to the Mediator complex subunit 18 family. Component of the Mediator complex.

The protein localises to the nucleus. Functionally, component of the Mediator complex, a coactivator involved in the regulated transcription of nearly all RNA polymerase II-dependent genes. Mediator functions as a bridge to convey information from gene-specific regulatory proteins to the basal RNA polymerase II transcription machinery. Mediator is recruited to promoters by direct interactions with regulatory proteins and serves as a scaffold for the assembly of a functional preinitiation complex with RNA polymerase II and the general transcription factors. The polypeptide is Mediator of RNA polymerase II transcription subunit 18 (srb5) (Aspergillus clavatus (strain ATCC 1007 / CBS 513.65 / DSM 816 / NCTC 3887 / NRRL 1 / QM 1276 / 107)).